The primary structure comprises 393 residues: UDP-glucose 6-dehydrogenase (393 aa).

6 residues coordinate NAD(+): Val11, Asp31, Lys36, Thr85, Thr120, and Glu147. Residues 143 to 147, Lys199, Asn203, 244 to 248, and Gly252 contribute to the substrate site; these read EFLRE and YNNPS. Residue Tyr254 coordinates NAD(+). Cys255 acts as the Nucleophile in catalysis. Lys258 contributes to the NAD(+) binding site. Lys309 contributes to the substrate binding site. Arg316 is an NAD(+) binding site.

The protein belongs to the UDP-glucose/GDP-mannose dehydrogenase family. Homodimer.

The catalysed reaction is UDP-alpha-D-glucose + 2 NAD(+) + H2O = UDP-alpha-D-glucuronate + 2 NADH + 3 H(+). It participates in nucleotide-sugar biosynthesis; UDP-alpha-D-glucuronate biosynthesis; UDP-alpha-D-glucuronate from UDP-alpha-D-glucose: step 1/1. Its pathway is capsule biogenesis; capsule polysaccharide biosynthesis. Its function is as follows. Catalyzes the formation of UDP-glucuronic acid which is required for capsular polysaccharide synthesis. Does not catalyze the formation of glucuronamide moiety of the capsular polysaccharide. This Campylobacter jejuni subsp. jejuni serotype O:2 (strain ATCC 700819 / NCTC 11168) protein is UDP-glucose 6-dehydrogenase.